A 387-amino-acid chain; its full sequence is 3-ketoacyl-CoA thiolase (387 aa).

Cysteine 91 (acyl-thioester intermediate) is an active-site residue. Active-site proton acceptor residues include histidine 343 and cysteine 373.

This sequence belongs to the thiolase-like superfamily. Thiolase family. As to quaternary structure, heterotetramer of two alpha chains (FadB) and two beta chains (FadA).

The protein localises to the cytoplasm. The catalysed reaction is an acyl-CoA + acetyl-CoA = a 3-oxoacyl-CoA + CoA. It functions in the pathway lipid metabolism; fatty acid beta-oxidation. Its function is as follows. Catalyzes the final step of fatty acid oxidation in which acetyl-CoA is released and the CoA ester of a fatty acid two carbons shorter is formed. The polypeptide is 3-ketoacyl-CoA thiolase (Erwinia tasmaniensis (strain DSM 17950 / CFBP 7177 / CIP 109463 / NCPPB 4357 / Et1/99)).